The following is a 1430-amino-acid chain: Nephrocystin-4 (1430 aa).

Residues 824-1430 (MRMGNVGRPP…ETFCVKVRYE (607 aa)) form a sufficient for basal bodies localization region. The tract at residues 828–857 (NVGRPPEKKLKRRETLPPSNSRIITMHDGR) is disordered.

It belongs to the NPHP4 family.

It is found in the cytoplasm. Its subcellular location is the cytoskeleton. It localises to the cilium basal body. Its function is as follows. Involved in the organization of apical junctions. Required for building functional cilia. Involved in the organization of the subapical actin network in multiciliated epithelial cells. Seems to recruit int to basal bodies of motile cilia which subsequently interacts with actin-modifying proteins such as daam1. May down-regulate the canonical Wnt pathway and promote the Wnt-PCP pathway. Acts as a negative regulator of the hippo pathway. The chain is Nephrocystin-4 (nphp4) from Xenopus laevis (African clawed frog).